The chain runs to 400 residues: S-adenosylmethionine sensor upstream of mTORC1 (400 aa).

6 residues coordinate S-adenosyl-L-methionine: R99, G168, D186, D198, F199, and S240.

The protein belongs to the BMT2/SAMTOR family. In terms of assembly, interacts with the GATOR1 complex; interaction is disrupted when samtor binds S-adenosyl-L-methionine. Interacts with the KICSTOR complex; interaction is disrupted when samtor binds S-adenosyl-L-methionine.

S-adenosyl-L-methionine-binding protein that acts as an inhibitor of mTORC1 signaling via interaction with the GATOR1 and KICSTOR complexes. Acts as a sensor of S-adenosyl-L-methionine to signal methionine sufficiency to mTORC1: in presence of methionine, binds S-adenosyl-L-methionine, leading to disrupt interaction with the GATOR1 and KICSTOR complexes and promote mTORC1 signaling. Upon methionine starvation, S-adenosyl-L-methionine levels are reduced, thereby promoting the association with GATOR1 and KICSTOR, leading to inhibit mTORC1 signaling. Probably also acts as a S-adenosyl-L-methionine-dependent methyltransferase. The polypeptide is S-adenosylmethionine sensor upstream of mTORC1 (Xenopus laevis (African clawed frog)).